A 435-amino-acid chain; its full sequence is Putative acid phosphatase F26C11.1 (435 aa).

His-38 functions as the Nucleophile in the catalytic mechanism. The active-site Proton donor is Asp-317. Cys-382 and Cys-388 form a disulfide bridge.

The protein belongs to the histidine acid phosphatase family.

It carries out the reaction a phosphate monoester + H2O = an alcohol + phosphate. This is Putative acid phosphatase F26C11.1 from Caenorhabditis elegans.